Consider the following 498-residue polypeptide: ATP synthase subunit beta, chloroplastic (498 aa).

172-179 (GGAGVGKT) is an ATP binding site.

Belongs to the ATPase alpha/beta chains family. In terms of assembly, F-type ATPases have 2 components, CF(1) - the catalytic core - and CF(0) - the membrane proton channel. CF(1) has five subunits: alpha(3), beta(3), gamma(1), delta(1), epsilon(1). CF(0) has four main subunits: a(1), b(1), b'(1) and c(9-12).

It is found in the plastid. Its subcellular location is the chloroplast thylakoid membrane. It carries out the reaction ATP + H2O + 4 H(+)(in) = ADP + phosphate + 5 H(+)(out). Its function is as follows. Produces ATP from ADP in the presence of a proton gradient across the membrane. The catalytic sites are hosted primarily by the beta subunits. In Vitis vinifera (Grape), this protein is ATP synthase subunit beta, chloroplastic.